We begin with the raw amino-acid sequence, 155 residues long: Aspartate carbamoyltransferase regulatory chain (155 aa).

4 residues coordinate Zn(2+): Cys109, Cys114, Cys138, and Cys141.

It belongs to the PyrI family. Contains catalytic and regulatory chains. The cofactor is Zn(2+).

In terms of biological role, involved in allosteric regulation of aspartate carbamoyltransferase. The sequence is that of Aspartate carbamoyltransferase regulatory chain from Vibrio cholerae serotype O1 (strain ATCC 39541 / Classical Ogawa 395 / O395).